The following is a 469-amino-acid chain: 3-isopropylmalate dehydratase large subunit (469 aa).

The [4Fe-4S] cluster site is built by cysteine 350, cysteine 410, and cysteine 413.

Belongs to the aconitase/IPM isomerase family. LeuC type 1 subfamily. In terms of assembly, heterodimer of LeuC and LeuD. [4Fe-4S] cluster is required as a cofactor.

The catalysed reaction is (2R,3S)-3-isopropylmalate = (2S)-2-isopropylmalate. It participates in amino-acid biosynthesis; L-leucine biosynthesis; L-leucine from 3-methyl-2-oxobutanoate: step 2/4. Functionally, catalyzes the isomerization between 2-isopropylmalate and 3-isopropylmalate, via the formation of 2-isopropylmaleate. The sequence is that of 3-isopropylmalate dehydratase large subunit from Rhodopseudomonas palustris (strain ATCC BAA-98 / CGA009).